The chain runs to 123 residues: Small ribosomal subunit protein uS12 (123 aa).

The interval 1-31 is disordered; sequence MPTINQLIRKPREAQKARDKAPALQASPQKR. Residues 10 to 21 show a composition bias toward basic and acidic residues; sequence KPREAQKARDKA. At Asp-89 the chain carries 3-methylthioaspartic acid.

The protein belongs to the universal ribosomal protein uS12 family. As to quaternary structure, part of the 30S ribosomal subunit. Contacts proteins S8 and S17. May interact with IF1 in the 30S initiation complex.

In terms of biological role, with S4 and S5 plays an important role in translational accuracy. Its function is as follows. Interacts with and stabilizes bases of the 16S rRNA that are involved in tRNA selection in the A site and with the mRNA backbone. Located at the interface of the 30S and 50S subunits, it traverses the body of the 30S subunit contacting proteins on the other side and probably holding the rRNA structure together. The combined cluster of proteins S8, S12 and S17 appears to hold together the shoulder and platform of the 30S subunit. The sequence is that of Small ribosomal subunit protein uS12 from Xanthobacter autotrophicus (strain ATCC BAA-1158 / Py2).